The chain runs to 107 residues: Flagellar hook-basal body complex protein FliE (107 aa).

This sequence belongs to the FliE family.

Its subcellular location is the bacterial flagellum basal body. This Mesorhizobium japonicum (strain LMG 29417 / CECT 9101 / MAFF 303099) (Mesorhizobium loti (strain MAFF 303099)) protein is Flagellar hook-basal body complex protein FliE.